The following is a 502-amino-acid chain: Histidine--tRNA ligase (502 aa).

The protein belongs to the class-II aminoacyl-tRNA synthetase family. As to quaternary structure, homodimer.

The protein resides in the cytoplasm. It carries out the reaction tRNA(His) + L-histidine + ATP = L-histidyl-tRNA(His) + AMP + diphosphate + H(+). This is Histidine--tRNA ligase from Brucella ovis (strain ATCC 25840 / 63/290 / NCTC 10512).